Reading from the N-terminus, the 1499-residue chain is Multidrug resistance protein CDR2 (1499 aa).

At Met-1 to Ser-511 the chain is on the cytoplasmic side. Residues Phe-148 to Gln-402 form the ABC transporter 1 domain. 6 consecutive transmembrane segments (helical) span residues Ile-512–Phe-532, Gly-546–Leu-566, Leu-596–Leu-616, Gly-621–Phe-641, Val-660–Gly-680, and Phe-763–Phe-783. Over Asn-784–Gly-1193 the chain is Cytoplasmic. Residues Phe-857–Ala-1101 form the ABC transporter 2 domain. ATP is bound at residue Gly-893–Thr-900. 6 helical membrane-spanning segments follow: residues Tyr-1194–Phe-1214, Ala-1229–Val-1249, Ile-1279–Leu-1299, Leu-1315–Ile-1335, Leu-1354–Phe-1374, and Phe-1465–Leu-1485.

Belongs to the ABC transporter superfamily. ABCG family. PDR (TC 3.A.1.205) subfamily.

Its subcellular location is the membrane. Functionally, multidrug efflux transporter. Confers resistance to azole antifungal agents, to other antifungals (terbinafine, amorolfine) and to a variety of metabolic inhibitors. This is Multidrug resistance protein CDR2 (CDR2) from Candida albicans (strain SC5314 / ATCC MYA-2876) (Yeast).